We begin with the raw amino-acid sequence, 181 residues long: Large ribosomal subunit protein uL6 (181 aa).

This sequence belongs to the universal ribosomal protein uL6 family. As to quaternary structure, part of the 50S ribosomal subunit.

Its function is as follows. This protein binds to the 23S rRNA, and is important in its secondary structure. It is located near the subunit interface in the base of the L7/L12 stalk, and near the tRNA binding site of the peptidyltransferase center. The sequence is that of Large ribosomal subunit protein uL6 from Hydrogenobaculum sp. (strain Y04AAS1).